The primary structure comprises 288 residues: RELT-like protein 1 (288 aa).

The signal sequence occupies residues 1–23; that stretch reads MAPPAASGIPSIAPSLGPTAVWL. Topologically, residues 24-57 are extracellular; the sequence is GNRSDLGDVQALASRDLPTTTVTAGNNNKPEHLE. The N-linked (GlcNAc...) asparagine glycan is linked to asparagine 25. A helical transmembrane segment spans residues 58-78; that stretch reads YVAFVLVPVFFIMGLLGILIC. Over 79-288 the chain is Cytoplasmic; the sequence is HVLKKKGYRC…EGTQERRSSE (210 aa). Disordered stretches follow at residues 145 to 172 and 237 to 288; these read FEPE…GAAS and HKSN…RSSE. The span at 152–172 shows a compositional bias: low complexity; it reads SPNAPGSPTSPGSPLSPGAAS. A compositionally biased stretch (basic and acidic residues) spans 237–246; sequence HKSNSKERKS.

It belongs to the RELT family.

Its subcellular location is the cell membrane. The polypeptide is RELT-like protein 1 (RELL1) (Gallus gallus (Chicken)).